Reading from the N-terminus, the 479-residue chain is Adenylate kinase 8 (479 aa).

2 adenylate kinase regions span residues 58–258 (PRIV…TYVQ) and 269–471 (PRVL…SGII). 67–72 (ASGKTT) is a binding site for ATP. Positions 87–113 (TLENLILNEFSYTATEARRLYLQRKTV) are NMP 1. AMP is bound by residues 140-143 (GIPE), Gln-147, and Arg-203. The LID 1 stretch occupies residues 177 to 206 (GKRIDPQTGEIYHTTFDWPPESEIQNRLMV). Position 278 to 283 (278 to 283 (GSGKSL)) interacts with ATP. An NMP 2 region spans residues 298 to 327 (CCGQLLKEAVADRTTFGELIQPFFEKEMAV). AMP contacts are provided by residues 325 to 327 (MAV), 354 to 357 (GVPR), and Gln-361. Positions 391 to 424 (LRRIDPVTGERYHLMYKPPPTMEIQARLLQNPKD) are LID 2. Arg-392 serves as a coordination point for ATP.

It belongs to the adenylate kinase family. Interacts with CFAP45 and CFAP52; CFAP45 and AK8 dimerization may create a cavity at the interface of the dimer that can accommodate AMP. In terms of tissue distribution, expressed in respiratory cells (at protein level).

It localises to the cytoplasm. Its subcellular location is the cytosol. The protein localises to the cytoskeleton. It is found in the cilium axoneme. It catalyses the reaction AMP + ATP = 2 ADP. It carries out the reaction a 2'-deoxyribonucleoside 5'-diphosphate + ATP = a 2'-deoxyribonucleoside 5'-triphosphate + ADP. The enzyme catalyses a ribonucleoside 5'-diphosphate + ATP = a ribonucleoside 5'-triphosphate + ADP. Functionally, nucleoside monophosphate (NMP) kinase that catalyzes the reversible transfer of the terminal phosphate group between nucleoside triphosphates and monophosphates. Has highest activity toward AMP, and weaker activity toward dAMP, CMP and dCMP. Also displays broad nucleoside diphosphate kinase activity. The polypeptide is Adenylate kinase 8 (AK8) (Homo sapiens (Human)).